A 337-amino-acid chain; its full sequence is Junctional sarcoplasmic reticulum protein 1 (337 aa).

Residues 1 to 84 (MATRAMEELD…EKEPVSKVTS (84 aa)) are mediates interaction with CACNA1S. Disordered regions lie at residues 23–125 (SALA…ELPW) and 159–337 (EAPA…KGRD). Composition is skewed to basic and acidic residues over residues 49-59 (SRSHDSQERVT) and 69-79 (TKPKKMEKEPV). The span at 165–180 (PESWASSSSSPKGPAS) shows a compositional bias: low complexity. A compositionally biased stretch (basic and acidic residues) spans 199 to 213 (SKLEERVQIPRSEEA). Acidic residues predominate over residues 214-225 (AEKDEWESEEAA). Basic and acidic residues-rich tracts occupy residues 236 to 277 (GPKE…RGAR), 285 to 309 (RRWE…DRKR), and 316 to 325 (RRPDEEDRPL). Over residues 326 to 337 (GRQKRRAGKGRD) the composition is skewed to basic residues.

As to quaternary structure, interacts with CACNA1S, CACNB1 and calsequestrin.

The protein resides in the sarcoplasmic reticulum membrane. Its subcellular location is the endoplasmic reticulum membrane. In terms of biological role, involved in skeletal muscle excitation/contraction coupling (EC), probably acting as a regulator of the voltage-sensitive calcium channel CACNA1S. EC is a physiological process whereby an electrical signal (depolarization of the plasma membrane) is converted into a chemical signal, a calcium gradient, by the opening of ryanodine receptor calcium release channels. May regulate CACNA1S membrane targeting and activity. The polypeptide is Junctional sarcoplasmic reticulum protein 1 (JSRP1) (Bos taurus (Bovine)).